The sequence spans 322 residues: Sideroflexin-1 (322 aa).

An N-acetylserine modification is found at Ser-2. The Mitochondrial matrix portion of the chain corresponds to 2–102 (SGELPPNINI…MSAQVPMNMT (101 aa)). A helical membrane pass occupies residues 103–120 (ITGCMMTFYRTTPAVLFW). At 121–146 (QWINQSFNAVVNYTNRSGDAPLTVNE) the chain is on the mitochondrial intermembrane side. The chain crosses the membrane as a helical span at residues 147-167 (LGTAYVSATTGAVATALGLNA). Over 168–174 (LTKHVSP) the chain is Mitochondrial matrix. The chain crosses the membrane as a helical span at residues 175–195 (LIGRFVPFAAVAAANCINIPL). Residues 196–228 (MRQRELKVGIPVTDENGNRLGESANAAKQAITQ) lie on the Mitochondrial intermembrane side of the membrane. A helical membrane pass occupies residues 229–249 (VVVSRILMAAPGMAIPPFIMN). Topologically, residues 250 to 266 (TLEKKAFLKRFPWMSAP) are mitochondrial matrix. A helical membrane pass occupies residues 267 to 287 (VQVGIVGFCLVFATPLCCALF). Residues 288–322 (PQKSSMSVTSLEAELQARIRETYPELRRVYFNKGL) are Mitochondrial intermembrane-facing.

The protein belongs to the sideroflexin family.

The protein localises to the mitochondrion inner membrane. The enzyme catalyses L-serine(in) = L-serine(out). The catalysed reaction is L-alanine(in) = L-alanine(out). It carries out the reaction L-cysteine(in) = L-cysteine(out). Amino acid transporter importing serine, an essential substrate of the mitochondrial branch of the one-carbon pathway, into mitochondria. Mitochondrial serine is then converted to glycine and formate, which exits to the cytosol where it is used to generate the charged folates that serve as one-carbon donors. May also transport other amino acids including alanine and cysteine. In Bos taurus (Bovine), this protein is Sideroflexin-1 (SFXN1).